The following is a 398-amino-acid chain: CCA-adding enzyme (398 aa).

Residues glycine 32 and arginine 35 each contribute to the ATP site. Glycine 32 and arginine 35 together coordinate CTP. Residues aspartate 45 and aspartate 47 each contribute to the Mg(2+) site. ATP-binding residues include arginine 116, aspartate 159, arginine 162, arginine 165, and arginine 168. The CTP site is built by arginine 116, aspartate 159, arginine 162, arginine 165, and arginine 168.

It belongs to the tRNA nucleotidyltransferase/poly(A) polymerase family. Bacterial CCA-adding enzyme type 3 subfamily. As to quaternary structure, homodimer. Mg(2+) is required as a cofactor.

It carries out the reaction a tRNA precursor + 2 CTP + ATP = a tRNA with a 3' CCA end + 3 diphosphate. It catalyses the reaction a tRNA with a 3' CCA end + 2 CTP + ATP = a tRNA with a 3' CCACCA end + 3 diphosphate. In terms of biological role, catalyzes the addition and repair of the essential 3'-terminal CCA sequence in tRNAs without using a nucleic acid template. Adds these three nucleotides in the order of C, C, and A to the tRNA nucleotide-73, using CTP and ATP as substrates and producing inorganic pyrophosphate. tRNA 3'-terminal CCA addition is required both for tRNA processing and repair. Also involved in tRNA surveillance by mediating tandem CCA addition to generate a CCACCA at the 3' terminus of unstable tRNAs. While stable tRNAs receive only 3'-terminal CCA, unstable tRNAs are marked with CCACCA and rapidly degraded. This chain is CCA-adding enzyme, found in Lactobacillus johnsonii (strain CNCM I-12250 / La1 / NCC 533).